Consider the following 349-residue polypeptide: N-acetyltaurine hydrolase (349 aa).

Histidine 26, histidine 28, glutamate 169, histidine 201, histidine 230, and aspartate 298 together coordinate a divalent metal cation.

It belongs to the metallo-dependent hydrolases superfamily. Phosphotriesterase family. The cofactor is a divalent metal cation.

It is found in the cytoplasm. It localises to the cytosol. It carries out the reaction N-acetyltaurine + H2O = taurine + acetate. The enzyme catalyses N-propanoyltaurine + H2O = propanoate + taurine. The catalysed reaction is N-acetyl-L-methionine + H2O = L-methionine + acetate. It catalyses the reaction N-acetyl-L-isoleucine + H2O = L-isoleucine + acetate. It carries out the reaction N-acetyl-L-leucine + H2O = L-leucine + acetate. The enzyme catalyses N-acetyl-L-valine + H2O = L-valine + acetate. N-acetyltaurine hydrolase that regulates feeding by catalyzing the hydrolysis of N-acetyltaurine into taurine and acetate. N-acetyltaurine has anorexigenic and anti-obesity effects that are dependent on GFRAL receptor and GDF15. PTER also acts on other N-acetyl amino acids (Met, Ile, Leu, Val) and N-propionyltaurine, but at lower rates. The sequence is that of N-acetyltaurine hydrolase from Pongo abelii (Sumatran orangutan).